The primary structure comprises 360 residues: Chorismate synthase (360 aa).

The segment at L36 to R60 is disordered. R48 contributes to the NADP(+) binding site. FMN contacts are provided by residues R125–S127, N246–A247, G286, K301–S305, and R327.

Belongs to the chorismate synthase family. Homotetramer. FMNH2 serves as cofactor.

It carries out the reaction 5-O-(1-carboxyvinyl)-3-phosphoshikimate = chorismate + phosphate. It participates in metabolic intermediate biosynthesis; chorismate biosynthesis; chorismate from D-erythrose 4-phosphate and phosphoenolpyruvate: step 7/7. Functionally, catalyzes the anti-1,4-elimination of the C-3 phosphate and the C-6 proR hydrogen from 5-enolpyruvylshikimate-3-phosphate (EPSP) to yield chorismate, which is the branch point compound that serves as the starting substrate for the three terminal pathways of aromatic amino acid biosynthesis. This reaction introduces a second double bond into the aromatic ring system. This chain is Chorismate synthase, found in Histophilus somni (strain 129Pt) (Haemophilus somnus).